Here is a 312-residue protein sequence, read N- to C-terminus: Elongation factor Ts, mitochondrial (312 aa).

It belongs to the EF-Ts family.

It is found in the mitochondrion. Its function is as follows. Associates with the EF-Tu.GDP complex and induces the exchange of GDP to GTP. It remains bound to the aminoacyl-tRNA.EF-Tu.GTP complex up to the GTP hydrolysis stage on the ribosome. This Xenopus laevis (African clawed frog) protein is Elongation factor Ts, mitochondrial (tsfm).